The following is a 331-amino-acid chain: L-lactate dehydrogenase A chain (331 aa).

NAD(+) contacts are provided by residues 29–57 and R98; that span reads GMVGMASAVSILLKDLCDELAMVDVMEDK. Substrate-binding residues include R105, N137, and R168. N137 is a binding site for NAD(+). The Proton acceptor role is filled by H192. T247 serves as a coordination point for substrate.

Belongs to the LDH/MDH superfamily. LDH family. In terms of assembly, homotetramer.

It localises to the cytoplasm. The enzyme catalyses (S)-lactate + NAD(+) = pyruvate + NADH + H(+). The protein operates within fermentation; pyruvate fermentation to lactate; (S)-lactate from pyruvate: step 1/1. Its function is as follows. Interconverts simultaneously and stereospecifically pyruvate and lactate with concomitant interconversion of NADH and NAD(+). In Notothenia neglecta (Yellowbelly rockcod), this protein is L-lactate dehydrogenase A chain (ldha).